A 489-amino-acid polypeptide reads, in one-letter code: Rhamnulokinase (489 aa).

13 to 17 (ASSGR) is an ATP binding site. The cysteines at positions 68 and 222 are disulfide-linked. Substrate-binding positions include Gly83 and 236 to 238 (HDT). Asp237 functions as the Proton acceptor in the catalytic mechanism. An ATP-binding site is contributed by Thr259. Asn296 serves as a coordination point for substrate. Gln304 provides a ligand contact to ATP. A disulfide bridge connects residues Cys353 and Cys370. Gly402 is a binding site for ATP. A disulfide bond links Cys413 and Cys417.

It belongs to the rhamnulokinase family. As to quaternary structure, monomer. Mg(2+) is required as a cofactor.

The enzyme catalyses L-rhamnulose + ATP = L-rhamnulose 1-phosphate + ADP + H(+). Its pathway is carbohydrate degradation; L-rhamnose degradation; glycerone phosphate from L-rhamnose: step 2/3. Involved in the catabolism of L-rhamnose (6-deoxy-L-mannose). Catalyzes the transfer of the gamma-phosphate group from ATP to the 1-hydroxyl group of L-rhamnulose to yield L-rhamnulose 1-phosphate. The polypeptide is Rhamnulokinase (Escherichia coli (strain K12 / DH10B)).